Here is a 460-residue protein sequence, read N- to C-terminus: Orexin receptor type 2 (460 aa).

Residues 1–54 lie on the Extracellular side of the membrane; sequence MSSTKLEDSLPRRNWSSASELNETQEPFLNPTDYDDEEFLRYLWREYLHPKEYE. N-linked (GlcNAc...) asparagine glycans are attached at residues N14 and N22. Residues 33–49 are required for response to orexin-A; the sequence is DYDDEEFLRYLWREYLH. The helical transmembrane segment at 55–75 threads the bilayer; the sequence is WVLIAGYIIVFVVALIGNVLV. The Cytoplasmic portion of the chain corresponds to 76-88; sequence CVAVWKNHHMRTV. A helical membrane pass occupies residues 89 to 110; that stretch reads TNYFIVNLSLADVLVTITCLPA. Residues 111–127 are Extracellular-facing; it reads TLVVDITETWFFGQSLC. A disulfide bridge links C127 with C210. The chain crosses the membrane as a helical span at residues 128–150; sequence KVIPYLQTVSVSVSVLTLSCIAL. The Cytoplasmic portion of the chain corresponds to 151–170; sequence DRWYAICHPLMFKSTAKRAR. The chain crosses the membrane as a helical span at residues 171–191; sequence NSIVVIWIVSCIIMIPQAIVM. The Extracellular segment spans residues 192-222; sequence ERSSMLPGLANKTTLFTVCDERWGGEVYPKM. Residue N202 is glycosylated (N-linked (GlcNAc...) asparagine). The helical transmembrane segment at 223-243 threads the bilayer; it reads YHICFFLVTYMAPLCLMVLAY. The Cytoplasmic portion of the chain corresponds to 244–304; it reads LQIFRKLWCR…QIRARRKTAR (61 aa). Residues 305-326 form a helical membrane-spanning segment; the sequence is MLMVVLLVFAICYLPISILNVL. Residues 327-342 lie on the Extracellular side of the membrane; it reads KRVFGMFTHTEDRETV. Residues 343-366 traverse the membrane as a helical segment; that stretch reads YAWFTFSHWLVYANSAANPIIYNF. The Cytoplasmic segment spans residues 367–460; it reads LSGKFREEFK…SSLLSTWLEV (94 aa).

It belongs to the G-protein coupled receptor 1 family. As to expression, expressed in the brain in the cerebral cortex, septal nuclei, hippocampus, medial thalamic groups, dorsal and median raphe nuclei, and many hypothalamic nuclei including the tuberomammillary nucleus, dorsomedial hypothalamus, paraventricular hypothalamic nucleus, and ventral premammillary nucleus. Not detected in the spleen, lung, liver, skeletal muscle, kidney and testis. Orexin receptor mRNA expression has also been reported in the adrenal gland, enteric nervous system, and pancreas.

It is found in the cell membrane. Its function is as follows. Nonselective, high-affinity receptor for both orexin-A and orexin-B neuropeptides. Triggers an increase in cytoplasmic Ca(2+) levels in response to orexin-A binding. The protein is Orexin receptor type 2 (Hcrtr2) of Rattus norvegicus (Rat).